The primary structure comprises 51 residues: uncharacterized protein (51 aa).

This is an uncharacterized protein from Saccharomyces cerevisiae (strain ATCC 204508 / S288c) (Baker's yeast).